The sequence spans 155 residues: Cytochrome c-type biogenesis protein CcmE (155 aa).

The Cytoplasmic portion of the chain corresponds to 1 to 8 (MNPRRKKR). Residues 9 to 29 (LLITSLLAVALSLAVGLVLFA) form a helical; Signal-anchor for type II membrane protein membrane-spanning segment. Over 30-155 (LQQNIDLFYT…GMDNFKANNK (126 aa)) the chain is Periplasmic. Positions 131 and 135 each coordinate heme.

The protein belongs to the CcmE/CycJ family.

The protein resides in the cell inner membrane. Heme chaperone required for the biogenesis of c-type cytochromes. Transiently binds heme delivered by CcmC and transfers the heme to apo-cytochromes in a process facilitated by CcmF and CcmH. The chain is Cytochrome c-type biogenesis protein CcmE from Psychromonas ingrahamii (strain DSM 17664 / CCUG 51855 / 37).